The following is an 85-amino-acid chain: Large ribosomal subunit protein bL27 (85 aa).

The disordered stretch occupies residues 1–21; it reads MAHKKAGGSTRNGRDSESKRL.

It belongs to the bacterial ribosomal protein bL27 family.

The polypeptide is Large ribosomal subunit protein bL27 (Pseudomonas entomophila (strain L48)).